The following is a 452-amino-acid chain: NAD kinase 2, mitochondrial (452 aa).

The transit peptide at 1–50 directs the protein to the mitochondrion; sequence MTCYRGFLLGSCRRVAGGRAALRGSGSGADGRRHLGHGQPRELAGGGSPA. Residues 23–52 are disordered; the sequence is RGSGSGADGRRHLGHGQPRELAGGGSPADG. At lysine 64 the chain carries N6-acetyllysine; alternate. Position 64 is an N6-succinyllysine; alternate (lysine 64). Position 176 is a phosphoserine (serine 176). Lysine 312 carries the post-translational modification N6-succinyllysine. The residue at position 327 (lysine 327) is an N6-acetyllysine; alternate. The residue at position 327 (lysine 327) is an N6-succinyllysine; alternate. Serine 377 bears the Phosphoserine mark. N6-acetyllysine is present on lysine 407.

This sequence belongs to the NAD kinase family. Homodimer.

Its subcellular location is the mitochondrion. The enzyme catalyses NAD(+) + ATP = ADP + NADP(+) + H(+). With respect to regulation, inhibited by NADH, NADPH and NADP(+). Mitochondrial NAD(+) kinase that phosphorylates NAD(+) to yield NADP(+). Can use both ATP or inorganic polyphosphate as the phosphoryl donor. The polypeptide is NAD kinase 2, mitochondrial (Nadk2) (Mus musculus (Mouse)).